We begin with the raw amino-acid sequence, 301 residues long: Protein FdhE homolog (301 aa).

The protein belongs to the FdhE family.

It localises to the cytoplasm. Its function is as follows. Necessary for formate dehydrogenase activity. This is Protein FdhE homolog from Shewanella baltica (strain OS185).